The primary structure comprises 135 residues: Glutaredoxin-C4 (135 aa).

Residues 32 to 132 (ADFVKKTISS…KLLGVSGNKE (101 aa)) enclose the Glutaredoxin domain. The cysteines at positions 52 and 55 are disulfide-linked.

Belongs to the glutaredoxin family. CPYC subfamily.

It localises to the cytoplasm. Functionally, has a glutathione-disulfide oxidoreductase activity in the presence of NADPH and glutathione reductase. Reduces low molecular weight disulfides and proteins. This is Glutaredoxin-C4 (GRXC4) from Arabidopsis thaliana (Mouse-ear cress).